The sequence spans 189 residues: Glycerol-3-phosphate acyltransferase (189 aa).

The next 5 helical transmembrane spans lie at 1–21 (MVWL…AVLL), 50–70 (KLAI…VLVA), 72–92 (WLGL…IGHL), 111–131 (MLLG…LLTF), and 151–171 (LLAW…GLIV).

Belongs to the PlsY family. Probably interacts with PlsX.

The protein localises to the cell inner membrane. It carries out the reaction an acyl phosphate + sn-glycerol 3-phosphate = a 1-acyl-sn-glycero-3-phosphate + phosphate. It participates in lipid metabolism; phospholipid metabolism. Its function is as follows. Catalyzes the transfer of an acyl group from acyl-phosphate (acyl-PO(4)) to glycerol-3-phosphate (G3P) to form lysophosphatidic acid (LPA). This enzyme utilizes acyl-phosphate as fatty acyl donor, but not acyl-CoA or acyl-ACP. This chain is Glycerol-3-phosphate acyltransferase, found in Pseudomonas aeruginosa (strain LESB58).